The sequence spans 1031 residues: MRMVSVRCKLARYLEDLEDIDFKKFKMHLEDYPSQKGCTSIPRGQTEKADHVDLATLMIDFNGEEKAWAMAKWIFAAINRRDLYEKAKREEPEWENANISVLSQEESLEEEWMGLLGYLSRISICRKKKDYCKKYRKYVRSKFQCIKDRNARLGESVNLNKRFTRLRLIKEHRSQQEREHELLAIGRTWAKIQDSPVSSVNLELLFDPEDQHSEPVHTVVFQGAAGIGKTILARKIMLDWASEKLYQDRFDYLFYIHCREVSLGTQRSLGDLIASCCPGPNPPIGKIVSKPSRILFLMDGFDELQGAFDEHTEALCTNWRKVERGDILLSSLIRKRLLPEASLLITTRPVALEKLQHLLGQARHVEILGFSEARRKEYFLKYFSDEQQAREAFRLIQENEILFTMCFIPLVCWIVCTGLKQQMDSGKSLARTSKTTTAVYIFFLSSLLQSQGGSQENHNSATLWGLCSLAADGIWNQKILFQECDLRNHGLQKADVSAFLRMNLFQKEVDCEKFYSFIHMTFQEFFAAMYYLLEEDNHGEMRNTPQACSKLPNRDVKVLLENYGKFEKGYLIFVVRFLFGLINQERTSYLEKKLSCKISQKIRLELLKWIEAKANAKTLQIEPSQLELFYCLYEMQEEDFVQRAMSHFPKIEIKLSTRMDHVVSSFCIENCRHVESLSLRLLHNSPKEEEEEEEVRHSHMDRSVLSDFEVAYSQGLVNYLTSSICRGIFSVLSNNWNLTELNLSGNTLGDPGMNVLCETLQQPGCNIRRLWLGQCCLSHQCCFNISSVLSNNQKLVELDLSHNALGDFGIRLLCVGLRHLFCNLKKLWLVSCCLTSASCEDLASVLSTNHSLTRLYLGENALGDSGVGILCEKVKNPHCNLQKLGLVNSGLTSGCCPALSSVLSTNQNLTHLYLQGNALGDMGVKLLCEGLLHRNCKLQVLELDNCSLTSHCCWDLSTLLTSNQSLRKLCLGNNDLGDLGVMLLCEVLKQQGCLLKSLRLCEMYFNYDTKRALETLQEEKPELTIVFEPSR.

Positions 1 to 93 (MRMVSVRCKL…YEKAKREEPE (93 aa)) constitute a Pyrin domain. Ser5 bears the Phosphoserine mark. Tyr13 carries the post-translational modification Phosphotyrosine. The S-palmitoyl cysteine moiety is linked to residue Cys125. Positions 126 to 129 (RKKK) are required for binding to phosphatidylinositol 4-phosphate (PtdIns4P). Phosphotyrosine occurs at positions 131, 135, and 138. The FISNA domain maps to 135-207 (YRKYVRSKFQ…SSVNLELLFD (73 aa)). Position 156 is a phosphoserine (Ser156). Thr164 serves as a coordination point for ATP. A phosphoserine mark is found at Ser195 and Ser198. Positions 217–533 (HTVVFQGAAG…EFFAAMYYLL (317 aa)) constitute an NACHT domain. ATP is bound at residue 223–230 (GAAGIGKT). Phosphoserine occurs at positions 262 and 292. Lys321 is covalently cross-linked (Glycyl lysine isopeptide (Lys-Gly) (interchain with G-Cter in ubiquitin)). A Phosphoserine modification is found at Ser331. Positions 352–356 (LEKLQ) match the KFERQ-like motif 1 motif. Lys427 is covalently cross-linked (Glycyl lysine isopeptide (Lys-Gly) (interchain with G-Cter in ubiquitin)). His519 contacts ATP. The KFERQ-like motif 2 motif lies at 601 to 605 (KIRLE). Lys687 is covalently cross-linked (Glycyl lysine isopeptide (Lys-Gly) (interchain with G-Cter in ubiquitin)). 2 positions are modified to phosphoserine: Ser723 and Ser730. LRR repeat units follow at residues 737–757 (NLTELNLSGNTLGDPGMNVLC), 766–787 (NIRRLWLGQCCLSHQCCFNISS), 794–814 (KLVELDLSHNALGDFGIRLLC), 823–844 (NLKKLWLVSCCLTSASCEDLAS), and 851–871 (SLTRLYLGENALGDSGVGILC). The KFERQ-like motif 3 signature appears at 793-797 (QKLVE). The residue at position 801 (Ser801) is a Phosphoserine. S-palmitoyl cysteine attachment occurs at residues Cys832, Cys833, and Cys839. Tyr856 bears the Phosphotyrosine mark. Lys873 is covalently cross-linked (Glycyl lysine isopeptide (Lys-Gly) (interchain with G-Cter in ubiquitin)). 4 LRR repeats span residues 880-901 (NLQKLGLVNSGLTSGCCPALSS), 908-929 (NLTHLYLQGNALGDMGVKLLCE), 937-958 (KLQVLELDNCSLTSHCCWDLST), and 965-986 (SLRKLCLGNNDLGDLGVMLLCE). Residue Cys953 is the site of S-palmitoyl cysteine attachment. Residue Lys968 forms a Glycyl lysine isopeptide (Lys-Gly) (interchain with G-Cter in ubiquitin) linkage. The KFERQ-like motif 4 motif lies at 986–990 (EVLKQ). Residue Ser1030 is modified to Phosphoserine.

Belongs to the NLRP family. In terms of assembly, sensor component of NLRP3 inflammasomes; inflammasomes are supramolecular complexes that assemble in the cytosol in response to pathogens and other damage-associated signals and play critical roles in innate immunity and inflammation. The core of NLRP3 inflammasomes consists of a signal sensor component (NLRP3), an adapter (PYCARD/ASC), which recruits an effector pro-inflammatory caspase (CASP1 and, possibly, CASP4 and CASP5). Homodecamer; inactive NLRP3 forms homodecameric double-ring cages that hide pyrin domains within NACHT-LRR rings to avoid premature activation. Interacts (via pyrin domain) with PYCARD/ASC (via pyrin domain); interaction is direct. Interacts (via LRR repeat domain) with NEK7 (via N-terminus); the interaction is required for the formation of the complex NLRP3:PYCARD, oligomerization of PYCARD/ASC and activation of CASP1. Interacts (via LRR repeat domain) with NR4A1/Nur77 (via N-terminus); the interaction is direct, requires activation of NR4A1 by its ligands NBRE-containing dsDNA and lipopolysaccharide, and stimulates the association of NLRP3 with NEK7 for non-canonical NLRP3 inflammasome activation. Interacts with CARD8; leading to inhibit formation of the NLRP3 inflammasome. Interacts with MEFV; this interaction targets NLRP3 to degradation by autophagy, hence preventing excessive IL1B- and IL18-mediated inflammation. Interacts with EIF2AK2/PKR; this interaction requires EIF2AK2 activity, is accompanied by EIF2AK2 autophosphorylation and promotes inflammasome assembly in response to specific stimuli. Interacts with GBP5 (via DAPIN domain); this interaction promotes inflammasome assembly in response to microbial and soluble, but not crystalline, agents. Interacts with PML (isoform PML-1) (via the leucine-rich repeat (LRR) domain); PML-mediated increase in NLRP3 inflammasome activation does not depend upon this interaction. Interacts (via NACHT domain) with DHX33 (via DEAH box); NLRP3 activation in presence of cytosolic dsRNA is mediated by DHX33. Interacts (via NACHT and LRR domains) with ARRB2; this interaction is direct and inducible by polyunsaturated fatty acids (PUFAs). Interacts (via NACHT domain) with DDX3X under both LPS-primed and inflammasome-activating conditions. Interacts with IRF4 (via the LRR domain); this interaction is direct and is required for optimal IRF4 binding to IL4 promoter and efficient IL4 transactivation during differentiation of Th2 helper T-cells. Interacts with MAVS; promoting localization to mitochondria and activation of the NLRP3 inflammasome. Interacts with MARK4; promoting localization of NLRP3 to the microtubule organizing center (MTOC). Interacts with TRIM50; this interaction also promotes NLRP3 oligomerization and subsequent inflammasome activation. Interacts with IRGM; preventing NLRP3 inflammasome assembly and promoting NLRP3 degradation. Interacts (via KFERQ-like motifs) with HSPA8/HSC70; promoting NLRP3 degradation by the chaperone-mediated autophagy pathway. Interacts (via NACHT and LLR domains) with ABHD8; this interaction is enhanced in the presence of NLRP3 inflammasome inducers, such as ATP, nigericin, silica, or alum. Interaction with ABHD8 leads the recruitment of ZDHHC12, hence facilitating NLRP3 palmitoylation and degradation by the chaperone-mediated autophagy pathway (CMA), therefore attenuating NLRP3 inflammasome activation. In terms of processing, phosphorylation at Ser-198 by MAPK8/JNK1 increases inflammasome activation by promoting deubiquitination by BRCC3 and NLRP3 homooligomerization. Phosphorylation at Ser-801 by CSNK1A1 prevents inflammasome activation by preventing NEK7 recruitment. Phosphorylation at Ser-5 in the pyrin domain inhibits homomultimerization of NLRP3 and activation of the NLRP3 inflammasome: dephosphorylation by protein phosphatase 2A (PP2A) promotes assembly of the NLRP3 inflammasome. Phosphorylation at Ser-292 by PKD/PRKD1 promotes NLRP3 inflammasome assembly. Phosphorylation by ERK1/MAPK3 promotes NLRP3 inflammasome assembly. Phosphorylation by BTK (at Tyr-131, Tyr-135 and Tyr-138) in the region that mediates binding to phosphatidylinositol phosphate, promotes relocalization of NLRP3 and assembly of the NLRP3 inflammasome. Phosphorylation at Tyr-856 inhibits NLRP3 inflammasome assembly: dephosphorylation by PTPN22 promotes inflammasome activation. Phosphorylated by LATS1 and LATS2 at Ser-262 following palmitoylation by ZDHHC1, promoting its relocalization to the microtubule organizing center (MTOC), where NLRP3 is activated by NEK7, leading to inflammasome assembly and activation. Post-translationally, ubiquitinated; undergoes both 'Lys-48'- and 'Lys-63'-linked polyubiquitination. Ubiquitination does not lead to degradation, but inhibits inflammasome activation. Deubiquitination is catalyzed by BRCC3 and associated with NLRP3 activation and inflammasome assembly. This process can be induced by the activation of Toll-like receptors (by LPS), through a non-transcriptional pathway dependent on the mitochondrial production of reactive oxygen species, and by ATP. Ubiquitinated by TRIM31 via 'Lys-48'-linked ubiquitination, leading to its degradation by the proteasome. Ubiquitinated at Lys-687 by the SCF(FBXL2) complex, leading to its degradation by the proteasome. Ubiquitinated by TRIM35 via 'lys-48' and 'Lys-63'-linked ubiquitination leading to inhibition of NLRP3 inflammasome activation. Undergoes 'Lys-27'-linked polyubiquitination by MARCHF5, leading to NLRP3-NEK7 complex formation and NLRP3 oligomerization. Palmitoylation by ZDHHC12 promotes NLRP3 degradation by the chaperone-mediated autophagy pathway (CMA) and therefore limits NLRP3 inflammasome activation. Interaction with ZDHHC12, and hence NLRP3 palmitoylation, is greatly enhanced by ABHD8. Following palmitoylation, HSPA8/HSC70 recognizes and binds the KFERQ-like motifs on NLRP3 and promotes NLRP3 recruitment to lysosomes, where it is degraded via the chaperone-mediated autophagy pathway in a LAMP2-dependent process. Palmitoylation at Cys-832 and Cys-833 by ZDHHC5 enhances its binding to NEK7 leading to inflammasome assembly and activation. Palmitoylation at Cys-125 and Cys-953 by ZDHHC1 facilitates phosphorylation at Ser-262 by LATS1 and LATS2, promoting its relocalization to the microtubule organizing center (MTOC), where NLRP3 is activated by NEK7, leading to inflammasome assembly and activation. Depalmitoylated by ABHD17A. In terms of processing, degraded via selective autophagy following interaction with IRGM. IRGM promotes NLRP3 recruitment to autophagosome membranes, promoting its SQSTM1/p62-dependent autophagy-dependent degradation.

The protein localises to the cytoplasm. Its subcellular location is the cytosol. The protein resides in the inflammasome. It localises to the cytoskeleton. It is found in the microtubule organizing center. The protein localises to the golgi apparatus membrane. Its subcellular location is the endoplasmic reticulum. The protein resides in the mitochondrion. It localises to the secreted. It is found in the nucleus. It catalyses the reaction ATP + H2O = ADP + phosphate + H(+). Under resting conditions, NLRP3 binds ADP and is autoinhibited. Inactive NLRP3 forms homodecameric double-ring cages that hide pyrin domains within NACHT-LRR rings to avoid premature activation. NLRP3 activation stimuli include extracellular ATP, nigericin, reactive oxygen species, crystals of monosodium urate or cholesterol, amyloid-beta fibers, environmental or industrial particles and nanoparticles, such as asbestos, silica, aluminum salts, cytosolic dsRNA, etc. Almost all stimuli trigger intracellular K(+) efflux. These stimuli lead to membrane perturbations that induce activation of NLRP3. Upon activation, NLRP3 is transported to microtubule organizing center (MTOC), where it is unlocked by NEK7, leading to its relocalization to dispersed trans-Golgi network (dTGN) vesicle membranes and recruitment of PYCARD/ASC for the formation of an active inflammasome complex. NEK7-activated NLRP3 forms a disk-shaped inflammasome. NLRP3 and PYCARD/ASC interact via their respective pyrin domains; interaction initiates speck formation (nucleation) which greatly enhances further addition of soluble PYCARD/ASC molecules to the speck in a prion-like polymerization process. Clustered PYCARD/ASC nucleates the formation of CASP1 filaments through the interaction of their respective CARD domains, acting as a platform for CASP1 polymerization and activation. Active CASP1 then processes IL1B and IL18 precursors, leading to the release of mature cytokines in the extracellular milieu and inflammatory response. NLRP3 inflammasome assembly is inhibited by IRGM, which impedes NLRP3 oligomerization. NLRP3 inflammasome is inhibited by cyclic AMP (cAMP), which directly binds NLRP3; inhibition is relieved by calcium-sensing receptor CASR, which inhibits production of cAMP. Specifically inhibited by sulfonylurea MCC950 (also named CP-456,773, CRID3), a potent and specific small-molecule inhibitor of the NLRP3 inflammasome that acts by preventing ATP hydrolysis. Sensor component of the NLRP3 inflammasome, which mediates inflammasome activation in response to defects in membrane integrity, leading to secretion of inflammatory cytokines IL1B and IL18 and pyroptosis. In response to pathogens and other damage-associated signals that affect the integrity of membranes, initiates the formation of the inflammasome polymeric complex composed of NLRP3, CASP1 and PYCARD/ASC. Recruitment of pro-caspase-1 (proCASP1) to the NLRP3 inflammasome promotes caspase-1 (CASP1) activation, which subsequently cleaves and activates inflammatory cytokines IL1B and IL18 and gasdermin-D (GSDMD), promoting cytokine secretion and pyroptosis. Activation of NLRP3 inflammasome is also required for HMGB1 secretion; stimulating inflammatory responses. Under resting conditions, ADP-bound NLRP3 is autoinhibited. NLRP3 activation stimuli include extracellular ATP, nigericin, reactive oxygen species, crystals of monosodium urate or cholesterol, amyloid-beta fibers, environmental or industrial particles and nanoparticles, such as asbestos, silica, aluminum salts, cytosolic dsRNA, etc. Almost all stimuli trigger intracellular K(+) efflux. These stimuli lead to membrane perturbation and activation of NLRP3. Upon activation, NLRP3 is transported to microtubule organizing center (MTOC), where it is unlocked by NEK7, leading to its relocalization to dispersed trans-Golgi network (dTGN) vesicle membranes and formation of an active inflammasome complex. Associates with dTGN vesicle membranes by binding to phosphatidylinositol 4-phosphate (PtdIns4P). Shows ATPase activity. In terms of biological role, independently of inflammasome activation, regulates the differentiation of T helper 2 (Th2) cells and has a role in Th2 cell-dependent asthma and tumor growth. During Th2 differentiation, required for optimal IRF4 binding to IL4 promoter and for IRF4-dependent IL4 transcription. Binds to the consensus DNA sequence 5'-GRRGGNRGAG-3'. May also participate in the transcription of IL5, IL13, GATA3, CCR3, CCR4 and MAF. This Bos taurus (Bovine) protein is NACHT, LRR and PYD domains-containing protein 3 (NLRP3).